The sequence spans 429 residues: Glutamate-1-semialdehyde 2,1-aminomutase 2 (429 aa).

Lys268 is modified (N6-(pyridoxal phosphate)lysine).

It belongs to the class-III pyridoxal-phosphate-dependent aminotransferase family. HemL subfamily. Homodimer. Pyridoxal 5'-phosphate is required as a cofactor.

The protein localises to the cytoplasm. The enzyme catalyses (S)-4-amino-5-oxopentanoate = 5-aminolevulinate. Its pathway is porphyrin-containing compound metabolism; protoporphyrin-IX biosynthesis; 5-aminolevulinate from L-glutamyl-tRNA(Glu): step 2/2. The chain is Glutamate-1-semialdehyde 2,1-aminomutase 2 from Staphylococcus carnosus (strain TM300).